The chain runs to 1058 residues: Outer capsid protein VP4 (1058 aa).

Belongs to the orthoreovirus lambda-2 protein family.

It localises to the virion. It carries out the reaction a 5'-end diphospho-ribonucleoside in mRNA + GTP + H(+) = a 5'-end (5'-triphosphoguanosine)-ribonucleoside in mRNA + diphosphate. It catalyses the reaction a 5'-end (5'-triphosphoguanosine)-ribonucleoside in mRNA + S-adenosyl-L-methionine = a 5'-end (N(7)-methyl 5'-triphosphoguanosine)-ribonucleoside in mRNA + S-adenosyl-L-homocysteine. Its function is as follows. Outer capsid protein involved in mRNA capping. Catalyzes the last 3 enzymatic activities for formation of the 5' cap structure on the viral plus-strand transcripts, namely the RNA guanylyltransferase, RNA-7N- and RNA-2'O-methyltransferase activities. The sequence is that of Outer capsid protein VP4 (S4) from Lymantria dispar cypovirus 1 (isolate Rao) (LdCPV-1).